A 1486-amino-acid polypeptide reads, in one-letter code: MIERGKFRSLTLINWNGFFARTFDLDELVTTLSGGNGAGKSTTMAAFVTALIPDLTLLHFRNTTEAGATSGSRDKGLHGKLKAGVCYSMLDTINSRHQRVVVGVRLQQVAGRDRKVDIKPFAIQGLPMSVQPTQLVTETLNERQARVLPLNELKDKLEAMEGVQFKQFNSITDYHSLMFDLGIIARRLRSASDRSKFYRLIEASLYGGISSAITRSLRDYLLPENSGVRKAFQDMEAALRENRMTLEAIRVTQSDRDLFKHLISEATNYVAADYMRHANERRVHLDKALEFRRELHTSRQQLAAEQYKHVDMARELAEHNGAEGDLEADYQAASDHLNLVQTALRQQEKIERYEADLDELQIRLEEQNEVVAEAIERQEENEARAEAAELEVDELKSQLADYQQALDVQQTRAIQYNQAIAALNRAKELCHLPDLTADSAAEWLETFQAKELEATEKMLSLEQKMSMAQTAHSQFEQAYQLVVAINGPLARNEAWDVARELLREGVDQRHLAEQVQPLRMRLSELEQRLREQQEAERLLADFCKRQGKNFDIDELEALHQELEARIASLSDSVSNAREERMALRQEQEQLQSRIQSLMQRAPVWLAAQNSLNQLSEQCGEEFTSSQDVTEYLQQLLEREREAIVERDEVGARKNAVDEEIERLSQPGGSEDQRLNALAERFGGVLLSEIYDDVSLEDAPYFSALYGPSRHAIVVPDLSQVTEHLEGLTDCPEDLYLIEGDPQSFDDSVFSVDELEKAVVVKIADRQWRYSRFPEVPLFGRAARESRIESLHAEREVLSERFATLSFDVQKTQRLHQAFSRFIGSHLAVAFESDPEAEIRQLNSRRVELERALSNHENDNQQQRIQFEQAKEGVTALNRILPRLNLLADDSLADRVDEIRERLDEAQEAARFVQQFGNQLAKLEPIVSVLQSDPEQFEQLKEDYAYSQQMQRDARQQAFALTEVVQRRAHFSYSDSAEMLSGNSDLNEKLRERLEQAEAERTRAREALRGHAAQLSQYNQVLASLKSSYDTKKELLNDLQRELQDIGVRADSGAEERARIRRDELHAQLSNNRSRRNQLEKALTFCEAEMDNLTRKLRKLERDYFEMREQVVTAKAGWCAVMRMVKDNGVERRLHRRELAYLSADDLRSMSDKALGALRLAVADNEHLRDVLRMSEDPKRPERKIQFFVAVYQHLRERIRQDIIRTDDPVEAIEQMEIELSRLTEELTSREQKLAISSRSVANIIRKTIQREQNRIRMLNQGLQNVSFGQVNSVRLNVNVRETHAMLLDVLSEQHEQHQDLFNSNRLTFSEALAKLYQRLNPQIDMGQRTPQTIGEELLDYRNYLEMEVEVNRGSDGWLRAESGALSTGEAIGTGMSILVMVVQSWEDESRRLRGKDISPCRLLFLDEAARLDARSIATLFELCERLQMQLIIAAPENISPEKGTTYKLVRKVFQNTEHVHVVGLRGFAPQLPETLPGSDEAPSQAS.

34–41 (GGNGAGKS) serves as a coordination point for ATP. Coiled-coil stretches lie at residues 326–418 (LEAD…QYNQ), 444–480 (LETF…QAYQ), and 509–603 (RHLA…RAPV). The tract at residues 666–783 (PGGSEDQRLN…EVPLFGRAAR (118 aa)) is flexible hinge. Coiled-coil stretches lie at residues 835–923 (EAEI…AKLE), 977–1115 (EMLS…TAKA), and 1209–1266 (VEAI…QNVS).

It belongs to the SMC family. MukB subfamily. Homodimerization via its hinge domain. Binds to DNA via its C-terminal region. Interacts, and probably forms a ternary complex, with MukE and MukF via its C-terminal region. The complex formation is stimulated by calcium or magnesium. Interacts with tubulin-related protein FtsZ.

It is found in the cytoplasm. Its subcellular location is the nucleoid. In terms of biological role, plays a central role in chromosome condensation, segregation and cell cycle progression. Functions as a homodimer, which is essential for chromosome partition. Involved in negative DNA supercoiling in vivo, and by this means organize and compact chromosomes. May achieve or facilitate chromosome segregation by condensation DNA from both sides of a centrally located replisome during cell division. This is Chromosome partition protein MukB from Escherichia coli O157:H7.